The primary structure comprises 142 residues: Large ribosomal subunit protein uL13 (142 aa).

The protein belongs to the universal ribosomal protein uL13 family. As to quaternary structure, part of the 50S ribosomal subunit.

Functionally, this protein is one of the early assembly proteins of the 50S ribosomal subunit, although it is not seen to bind rRNA by itself. It is important during the early stages of 50S assembly. This chain is Large ribosomal subunit protein uL13, found in Caldicellulosiruptor saccharolyticus (strain ATCC 43494 / DSM 8903 / Tp8T 6331).